The following is a 187-amino-acid chain: Phosphatidylethanolamine-binding protein 1 (187 aa).

S6 and S13 each carry phosphoserine. A Phosphothreonine modification is found at T42. Residues S52, S54, S98, and S153 each carry the phosphoserine modification. The tract at residues 93-134 is interaction with RAF1; it reads KGNDISSGTVLSDYVGSGPPKGTGLHRYVWLVYEQARPLKCD.

This sequence belongs to the phosphatidylethanolamine-binding protein family. In terms of assembly, has a tendency to form dimers by disulfide cross-linking. Interacts with RAF1 and this interaction is enhanced if RAF1 is phosphorylated on residues 'Ser-338', 'Ser-339', 'Tyr-340' and 'Tyr-341'. Interacts with ALOX15; in response to IL13/interleukin-13, prevents the interaction of PEBP1 with RAF1 to activate the ERK signaling cascade.

Its subcellular location is the cytoplasm. Its function is as follows. Binds ATP, opioids and phosphatidylethanolamine. Has lower affinity for phosphatidylinositol and phosphatidylcholine. Serine protease inhibitor which inhibits thrombin, neuropsin and chymotrypsin but not trypsin, tissue type plasminogen activator and elastase. Inhibits the kinase activity of RAF1 by inhibiting its activation and by dissociating the RAF1/MEK complex and acting as a competitive inhibitor of MEK phosphorylation. HCNP may be involved in the function of the presynaptic cholinergic neurons of the central nervous system. HCNP increases the production of choline acetyltransferase but not acetylcholinesterase. Seems to be mediated by a specific receptor. This Macaca fascicularis (Crab-eating macaque) protein is Phosphatidylethanolamine-binding protein 1 (PEBP1).